The chain runs to 153 residues: uncharacterized protein (153 aa).

Helical transmembrane passes span Ile16–Ile36 and Ala97–Cys117.

It is found in the membrane. This is an uncharacterized protein from Human herpesvirus 6A (strain Uganda-1102) (HHV-6 variant A).